The following is a 358-amino-acid chain: MPSVSPAGPSAGAVPNATAVTTVRTNASGLEVPLFHLFARLDEELHGTFPGLWLALMAVHGAIFLAGLVLNGLALYVFCCRTRAKTPSVIYTINLVVTDLLVGLSLPTRFAVYYGARGCLRCAFPHVLGYFLNMHCSILFLTCICVDRYLAIVRPEGSRRCRQPACARAVCAFVWLAAGAVTLSVLGVTGSRPCCRVFALTVLEFLLPLLVISVFTGRIMCALSRPGLLHQGRQRRVRAMQLLLTVLIIFLVCFTPFHARQVAVALWPDMPHHTSLVVYHVAVTLSSLNSCMDPIVYCFVTSGFQATVRGLFGQHGEREPSSGDVVSMHRSSKGSGRHHILSAGPHALTQALANGPEA.

Over 1–48 (MPSVSPAGPSAGAVPNATAVTTVRTNASGLEVPLFHLFARLDEELHGT) the chain is Extracellular. 2 N-linked (GlcNAc...) asparagine glycosylation sites follow: Asn-16 and Asn-26. Residues 49–69 (FPGLWLALMAVHGAIFLAGLV) form a helical membrane-spanning segment. Over 70-86 (LNGLALYVFCCRTRAKT) the chain is Cytoplasmic. A helical membrane pass occupies residues 87–107 (PSVIYTINLVVTDLLVGLSLP). The Extracellular portion of the chain corresponds to 108–125 (TRFAVYYGARGCLRCAFP). Residues 126 to 146 (HVLGYFLNMHCSILFLTCICV) traverse the membrane as a helical segment. At 147–168 (DRYLAIVRPEGSRRCRQPACAR) the chain is on the cytoplasmic side. A helical transmembrane segment spans residues 169 to 189 (AVCAFVWLAAGAVTLSVLGVT). Residues 190–196 (GSRPCCR) lie on the Extracellular side of the membrane. Residues 197–217 (VFALTVLEFLLPLLVISVFTG) form a helical membrane-spanning segment. The Cytoplasmic segment spans residues 218–238 (RIMCALSRPGLLHQGRQRRVR). A helical transmembrane segment spans residues 239–259 (AMQLLLTVLIIFLVCFTPFHA). Over 260-275 (RQVAVALWPDMPHHTS) the chain is Extracellular. Residues 276–296 (LVVYHVAVTLSSLNSCMDPIV) traverse the membrane as a helical segment. At 297 to 358 (YCFVTSGFQA…TQALANGPEA (62 aa)) the chain is on the cytoplasmic side. A disordered region spans residues 315–339 (HGEREPSSGDVVSMHRSSKGSGRHH). A compositionally biased stretch (basic residues) spans 330 to 339 (RSSKGSGRHH).

Belongs to the G-protein coupled receptor 1 family. In terms of tissue distribution, ubiquitous with highest levels in intestinal tissues. In the brain detected in thalamus, putamen, and caudate, but not in frontal cortex, pons and hypothalamus.

The protein localises to the cell membrane. Its function is as follows. Orphan receptor with constitutive G(i) signaling activity that activate cyclic AMP. The sequence is that of G-protein coupled receptor 20 (GPR20) from Homo sapiens (Human).